The following is a 776-amino-acid chain: Zinc finger CCCH-type antiviral protein 1 (776 aa).

A2 is subject to N-acetylalanine. The N-terminal domain stretch occupies residues 2–254 (ADPGVCCFIT…DRSKSRDRFL (253 aa)). The Nuclear localization signal motif lies at 69–76 (RARVCRRK). C3H1-type zinc fingers lie at residues 73–86 (CRRK…DSLH), 88–110 (CKLN…KYSH), 150–172 (CKSY…ERLH), and 169–193 (ERLH…SHNL). Positions 221-249 (NKHARRNPPGTRAAHPHRRGGAHRDRSKS) are disordered. Residues 224 to 254 (ARRNPPGTRAAHPHRRGGAHRDRSKSRDRFL) form a binding to EXOSC5 region. Phosphoserine; by GSK3-beta is present on residues S257, S262, S266, and S270. Phosphoserine is present on S274. T278 bears the Phosphothreonine mark. Phosphoserine is present on S283. Positions 284 to 291 (LEDVSVDV) match the Nuclear export signal motif. A disordered region spans residues 308–355 (PVSSKAAGVQGPSQMRASQEFSEDGNLDDIFSRNRSDSSSSRASAAKV). The segment covering 318–327 (GPSQMRASQE) has biased composition (polar residues). Residues S325, S351, and S398 each carry the phosphoserine modification. Positions 344-353 (DSSSSRASAA) are enriched in low complexity. The Nuclear localization signal signature appears at 405–406 (KK). The disordered stretch occupies residues 457–483 (WASASTHNAPNGSSQIMDETPNVSKSS). Residues 459–483 (SASTHNAPNGSSQIMDETPNVSKSS) are compositionally biased toward polar residues. Phosphotyrosine is present on Y501. The interval 512-562 (LAVPGEATTPVQSNRLPQSPLSSSSHRAAASGSPGKNSTHTSVSPAIESSR) is disordered. Positions 523-546 (QSNRLPQSPLSSSSHRAAASGSPG) are enriched in low complexity. A phosphoserine mark is found at S544 and S667. Residues 671-758 (YEEKPLSAVF…ASKTQRHVVR (88 aa)) form the WWE domain.

This sequence belongs to the ARTD/PARP family. In terms of assembly, homodimer or homooligomer. Homooligomerization is essential for its antiviral activity. Interacts with EXOSC5. Interacts with EXOSC3, EXOSC7, DCP2 and DCP1A. Interacts with PARN in an RNA-independent manner. Interacts with XRN1 in an RNA-dependent manner. Interacts (via N-terminal domain) with DHX30 (via N-terminus) in an RNA-independent manner. Interacts (via N-terminal domain) with DDX17 in an RNA-independent manner. In terms of processing, phosphorylation at Ser-274 is essential for sequential phosphorylation of Ser-270, Ser-266, Ser-262 and Ser-257 by GSK3-beta. Phosphorylation by GSK3-beta enhances its antiviral activity. As to expression, expressed in the kidney and liver.

The protein localises to the cytoplasm. Its subcellular location is the nucleus. Functionally, antiviral protein which inhibits the replication of viruses by recruiting the cellular RNA degradation machineries to degrade the viral mRNAs. Binds to a ZAP-responsive element (ZRE) present in the target viral mRNA, recruits cellular poly(A)-specific ribonuclease PARN to remove the poly(A) tail, and the 3'-5' exoribonuclease complex exosome to degrade the RNA body from the 3'-end. It also recruits the decapping complex DCP1-DCP2 through RNA helicase p72 (DDX17) to remove the cap structure of the viral mRNA to initiate its degradation from the 5'-end. Its target viruses belong to families which include retroviridae: human immunodeficiency virus type 1 (HIV-1) and moloney and murine leukemia virus (MoMLV), filoviridae: ebola virus (EBOV) and marburg virus (MARV), togaviridae: sindbis virus (SINV) and Ross river virus (RRV). Specifically targets the multiply spliced but not unspliced or singly spliced HIV-1 mRNAs for degradation. This is Zinc finger CCCH-type antiviral protein 1 (Zc3hav1) from Rattus norvegicus (Rat).